Reading from the N-terminus, the 675-residue chain is G-protein coupled receptor moody (675 aa).

The Extracellular segment spans residues 1–44 (MSDETTGSLGDAFSPMDTPTTTIMPPPADVDESGFSHSLLTFAA). The helical transmembrane segment at 45–65 (VMTFLIMIVGICGNLLTVVAL) threads the bilayer. Residues 66 to 73 (LKCPKVRN) are Cytoplasmic-facing. The helical transmembrane segment at 74 to 94 (VAAAFIISLCIADLLFCALVL) threads the bilayer. The Extracellular portion of the chain corresponds to 95–115 (PFQGLRFVQGTWRHGEVLCRL). A disulfide bridge links C113 with C192. A helical membrane pass occupies residues 116–136 (IPFIQYGNIGVSLLCIAMITI). The Cytoplasmic segment spans residues 137–156 (NRYVMITHYSLYNRIYKRHW). The chain crosses the membrane as a helical span at residues 157–177 (IAIMIAACWLFSYGMQLPTLL). At 178–206 (GAWGRFGYDARLQTCSIMSDRHGHSSKTT) the chain is on the extracellular side. Residues 207–227 (LFITAFVIPCLVIIACYAKIF) form a helical membrane-spanning segment. The Cytoplasmic portion of the chain corresponds to 228–327 (WVVHKSEQRL…AKRNEWRITK (100 aa)). Positions 258-316 (TSMPSGDGANPSQVPAGCRVSSDSSSNYSTDVPDTTPGGAGGGAGVKQQPSRVKDQREV) are disordered. The segment covering 278–294 (SSDSSSNYSTDVPDTTP) has biased composition (low complexity). The helical transmembrane segment at 328–348 (MVLAIFLSFVICYLPITIVKV) threads the bilayer. At 349-359 (ADKDVEHPSLH) the chain is on the extracellular side. A helical membrane pass occupies residues 360–380 (IFSYIMLYLSACINPIIYVIM). The Cytoplasmic segment spans residues 381–675 (NKQYRKAYKT…LMDKKKFPKD (295 aa)). Disordered stretches follow at residues 475–568 (SKSS…GNGS) and 588–675 (LPPT…FPKD). Over residues 536-551 (SSVISANPSSSPSPSS) the composition is skewed to low complexity. Gly residues predominate over residues 552–565 (SGGGIYRPGIGSMG). Residues 666-675 (LMDKKKFPKD) are compositionally biased toward basic and acidic residues.

The protein belongs to the G-protein coupled receptor 1 family.

It localises to the cell membrane. Functionally, required in glia to regulate the acute sensitivity to cocaine and to continuously maintain the proper blood-brain barrier (BBB) function. A moody-mediated signaling pathway functions in glia to regulate nervous system insulation and drug-related behaviors. The sequence is that of G-protein coupled receptor moody from Drosophila pseudoobscura pseudoobscura (Fruit fly).